A 344-amino-acid polypeptide reads, in one-letter code: L-rhamnose-proton symporter (344 aa).

Transmembrane regions (helical) follow at residues 4-24 (AITM…CFYA), 38-58 (WSVG…ALLL), 68-88 (FNLS…IGNI), 101-121 (MGIG…TPII), 137-157 (TLLG…AGQL), 175-195 (LLLA…MNAA), 214-234 (LPSY…FCFI), 259-279 (ILLS…YAWG), 290-310 (MSWM…GLVL), and 321-341 (VAVL…VGLG).

It belongs to the L-rhamnose transporter (TC 2.A.7.6) family.

Its subcellular location is the cell inner membrane. It carries out the reaction L-rhamnopyranose(in) + H(+)(in) = L-rhamnopyranose(out) + H(+)(out). Uptake of L-rhamnose across the cytoplasmic membrane with the concomitant transport of protons into the cell (symport system). The sequence is that of L-rhamnose-proton symporter from Salmonella paratyphi A (strain ATCC 9150 / SARB42).